A 380-amino-acid polypeptide reads, in one-letter code: MAETNQPGKIFIGGLNIKTRQKTLQEIFGRFGPVARVILMRDRETKKSRGFAFLTFRRLADAKNAVKEMNGVILDGKRIKVKQARRPSSLESGSKKRPPSFSRTRGASRILKCGRGGRSRARSGPSCEGNLGGDRYTPNFNVSSSGRHFAVKRNPSSKRDDPPSKRSATSAQTRSNTGLRGREPHRREISRNMPRGEPASSRRDEYPLPRDYGQSSNDRKYESTSRGYCDYGNYHSREESASKVFSDHAGYLGGRDRDFSEYLSGNSYRDTYRSYGRFHEAPSARGGNNRYDDYSNSQDGYGGRGEPYISNRSNIYSSDYERSGRQEVLPPPIDREYFDREGRQERGHSPKDGLYSASRESYSSNTKIWGIPWRSWRKQI.

One can recognise an RRM domain in the interval 8 to 86 (GKIFIGGLNI…KRIKVKQARR (79 aa)). Disordered regions lie at residues 82-226 (KQAR…STSR) and 279-358 (HEAP…YSAS). Residues 166 to 178 (RSATSAQTRSNTG) show a composition bias toward polar residues. Composition is skewed to basic and acidic residues over residues 180–190 (RGREPHRREIS) and 333–351 (IDREYFDREGRQERGHSPK).

Interacts with SRSF3/SRP20, SRSF9/SRP30, SRSF5/SRP40, and SRSF6/SRP55; this interaction inhibits SRSF family member pre-mRNA splicing. Interacts with splicing factor proteins and KHDRBS3. In terms of tissue distribution, testis-specific.

It localises to the nucleus. Functionally, RNA-binding protein involved in pre-mRNA splicing. Required for sperm development. Acts additively with TRA2B to promote exon 7 inclusion of the survival motor neuron SMN. Binds non-specifically to mRNAs. The polypeptide is RNA-binding motif protein, Y chromosome (Mus musculus (Mouse)).